The chain runs to 1036 residues: Serine/threonine-protein kinase ULK2 (1036 aa).

The Protein kinase domain occupies 9–271; the sequence is YSKRDLVGHG…FEAFFSHPFL (263 aa). ATP contacts are provided by residues 15–23 and Lys39; that span reads VGHGAFAVV. Asp131 (proton acceptor) is an active-site residue. 5 disordered regions span residues 319–348, 418–460, 491–522, 540–588, and 656–695; these read ENLS…NSSC, TSTA…ADTA, CCCG…SLLS, QKLR…SSDW, and AEQQ…LNTE. Residues 335–348 show a composition bias toward low complexity; that stretch reads SKDSASTSSKNSSC. Residues 418 to 428 show a composition bias toward polar residues; it reads TSTASSGTNVH. Ser430 carries the post-translational modification Phosphoserine. Polar residues predominate over residues 504–521; sequence RNSSGSPVPQAQSPQSLL. The segment covering 659 to 679 has biased composition (polar residues); sequence QSKAVFGRSVSTGKLSDQQGK. 2 positions are modified to phosphoserine: Ser771 and Ser780. Positions 812-1036 are CTD-like region; that stretch reads ELPEETLMER…SALCHSTATV (225 aa).

It belongs to the protein kinase superfamily. Ser/Thr protein kinase family. APG1/unc-51/ULK1 subfamily. In terms of assembly, interacts with SYNGAP1. Component of a complex consisting of ATG13/KIAA0652, ULK1 and RB1CC1/FIP200. Interacts (via C-terminus) with ATG13/KIAA0652. Associates with the mammalian target of rapamycin complex 1 (mTORC1) through an interaction with RPTOR. Post-translationally, autophosphorylated. In response to nutrient limitation, probably phosphorylated and activated by AMPK, leading to activate autophagy.

The protein resides in the cytoplasmic vesicle membrane. The enzyme catalyses L-seryl-[protein] + ATP = O-phospho-L-seryl-[protein] + ADP + H(+). It carries out the reaction L-threonyl-[protein] + ATP = O-phospho-L-threonyl-[protein] + ADP + H(+). Functionally, serine/threonine-protein kinase involved in autophagy in response to starvation. Acts upstream of phosphatidylinositol 3-kinase PIK3C3 to regulate the formation of autophagophores, the precursors of autophagosomes. Part of regulatory feedback loops in autophagy: acts both as a downstream effector and a negative regulator of mammalian target of rapamycin complex 1 (mTORC1) via interaction with RPTOR. Activated via phosphorylation by AMPK, also acts as a negative regulator of AMPK through phosphorylation of the AMPK subunits PRKAA1, PRKAB2 and PRKAG1. May phosphorylate ATG13/KIAA0652, FRS2, FRS3 and RPTOR; however such data need additional evidences. Not involved in ammonia-induced autophagy or in autophagic response of cerebellar granule neurons (CGN) to low potassium concentration. Plays a role early in neuronal differentiation and is required for granule cell axon formation: may govern axon formation via Ras-like GTPase signaling and through regulation of the Rab5-mediated endocytic pathways within developing axons. The polypeptide is Serine/threonine-protein kinase ULK2 (ULK2) (Homo sapiens (Human)).